We begin with the raw amino-acid sequence, 213 residues long: MAALLRAVRRFRGKAVWERPLHGLWCCSGQEDPKRWVGSSSPISKEKLPNAETEKFWMFYRFDAIRTFGFLSRLKLAQTALTVVALPPGYYLYSQGLLTLNTVCLMSGISGFALTMLCWMSYFLRRLVGILYLNESGTMLRVAHLNFWGWRQDTYCPMADVIPLTETKDRPQEMFVRIQRYSGKQTFYVTLRYGRILDRERFTQVFGVHQMLK.

Residues 1–79 (MAALLRAVRR…FLSRLKLAQT (79 aa)) lie on the Mitochondrial matrix side of the membrane. The helical transmembrane segment at 80–100 (ALTVVALPPGYYLYSQGLLTL) threads the bilayer. Residues 101 to 102 (NT) lie on the Mitochondrial intermembrane side of the membrane. A helical membrane pass occupies residues 103-123 (VCLMSGISGFALTMLCWMSYF). Residues 124 to 213 (LRRLVGILYL…QVFGVHQMLK (90 aa)) lie on the Mitochondrial matrix side of the membrane.

The protein belongs to the TMEM186 family. Part of the mitochondrial complex I assembly/MCIA complex that comprises at least the core subunits TMEM126B, NDUFAF1, ECSIT and ACAD9 and complement subunits such as COA1 and TMEM186. Interacts with MT-ND3.

It is found in the mitochondrion inner membrane. Its function is as follows. As part of the MCIA complex, required for efficient assembly of the mitochondrial complex I. This chain is Transmembrane protein 186, found in Homo sapiens (Human).